Consider the following 84-residue polypeptide: Sec-independent protein translocase protein TatA (84 aa).

The chain crosses the membrane as a helical span at residues 1–21 (MGGISIWQLLIIAVIVILLFG). Residues 40 to 84 (KKAMSDEDKPADKKDADFEPKNIEQQKTEASAETTAETKKDKEQA) are disordered. 2 stretches are compositionally biased toward basic and acidic residues: residues 42–66 (AMSD…EQQK) and 75–84 (AETKKDKEQA).

The protein belongs to the TatA/E family. In terms of assembly, the Tat system comprises two distinct complexes: a TatABC complex, containing multiple copies of TatA, TatB and TatC subunits, and a separate TatA complex, containing only TatA subunits. Substrates initially bind to the TatABC complex, which probably triggers association of the separate TatA complex to form the active translocon.

It is found in the cell inner membrane. Functionally, part of the twin-arginine translocation (Tat) system that transports large folded proteins containing a characteristic twin-arginine motif in their signal peptide across membranes. TatA could form the protein-conducting channel of the Tat system. The chain is Sec-independent protein translocase protein TatA from Vibrio atlanticus (strain LGP32) (Vibrio splendidus (strain Mel32)).